The following is a 301-amino-acid chain: MMAGGGSGRCLFTATQWQELEHQALIYKYMAAGAPVPPDLLLHLRHRAAAAAAADVDTVPSLAFPPHHLGWGCYGAAAAQYGRRVEDPEPGRCRRTDGKKWRCSREAYGESKYCEKHMHRGKNRSRKPVEMPPPAAAAVYRPSALSISPPPHDADAPSYGAGAGAPLQLHLDSFHASTSPPPSYHRYAHTSSAPLFPSSAAGYGGGWSLSKEHCLTLGGAAADLSLDKPADHHHDATSATTEKPLRRFFDEWPRSDDGRTPWDGTQLSISIPTAAAASPDLAIAGAASRYHSNGDHLRTSE.

A QLQ domain is found at 11 to 46; it reads LFTATQWQELEHQALIYKYMAAGAPVPPDLLLHLRH. Short sequence motifs (bipartite nuclear localization signal) lie at residues 83–102 and 120–127; these read RRVE…KKWR and RGKNRSRK. In terms of domain architecture, WRC spans 87–131; it reads DPEPGRCRRTDGKKWRCSREAYGESKYCEKHMHRGKNRSRKPVEM.

The protein belongs to the GRF family.

It localises to the nucleus. Functionally, transcription activator that plays a regulatory role in gibberellin-induced stem elongation. The protein is Growth-regulating factor 2 (GRF2) of Oryza sativa subsp. japonica (Rice).